A 241-amino-acid polypeptide reads, in one-letter code: tRNA (guanine-N(7)-)-methyltransferase (241 aa).

Residues 1 to 20 (MTESNDTPIQPEAGDERQHR) are disordered. Glutamate 71, glutamate 96, aspartate 123, and aspartate 146 together coordinate S-adenosyl-L-methionine. Aspartate 146 is an active-site residue. Residues lysine 150, aspartate 182, and 219–222 (TKFE) each bind substrate.

Belongs to the class I-like SAM-binding methyltransferase superfamily. TrmB family.

The catalysed reaction is guanosine(46) in tRNA + S-adenosyl-L-methionine = N(7)-methylguanosine(46) in tRNA + S-adenosyl-L-homocysteine. It participates in tRNA modification; N(7)-methylguanine-tRNA biosynthesis. Functionally, catalyzes the formation of N(7)-methylguanine at position 46 (m7G46) in tRNA. This chain is tRNA (guanine-N(7)-)-methyltransferase, found in Pseudomonas fluorescens (strain ATCC BAA-477 / NRRL B-23932 / Pf-5).